Here is a 1207-residue protein sequence, read N- to C-terminus: Dermatan-sulfate epimerase-like protein (1207 aa).

A signal peptide spans 1-22; sequence MAFMFTEHLLFLTLMMCSFSTC. N-linked (GlcNAc...) asparagine glycosylation is found at N28, N661, N683, and N704. Helical transmembrane passes span 761–781 and 798–818; these read FPFGFKFNIAVGFILCISLVI and CVLILVIALWFIELLDVWSTC. N-linked (GlcNAc...) asparagine glycosylation occurs at N869.

Belongs to the dermatan-sulfate isomerase family.

It localises to the membrane. The polypeptide is Dermatan-sulfate epimerase-like protein (Dsel) (Mus musculus (Mouse)).